The primary structure comprises 349 residues: FK506-binding protein-like (349 aa).

Threonine 3 carries the phosphothreonine modification. A disordered region spans residues 36-55 (RQQPRDPPTETLELEVSPDP). TPR repeat units lie at residues 210-243 (AREE…LLTL), 252-285 (TVLH…EPGH), and 286-319 (LKAL…DPKN).

Forms a ternary complex with CDKN1A/p21 and HSP90AB1/Hsp90. As to expression, ubiquitously expressed with higher levels in testis.

Its function is as follows. May be involved in response to X-ray. Regulates p21 protein stability by binding to Hsp90 and p21. In Homo sapiens (Human), this protein is FK506-binding protein-like (FKBPL).